Reading from the N-terminus, the 141-residue chain is Hemoglobin subunit alpha-A (141 aa).

The region spanning 1 to 141 (VLSGTDKTNV…VGAVLTAKYR (141 aa)) is the Globin domain. An O2-binding site is contributed by His-58. His-87 is a binding site for heme b.

This sequence belongs to the globin family. In terms of assembly, heterotetramer of two alpha chains and two beta chains. In terms of tissue distribution, red blood cells.

Involved in oxygen transport from the lung to the various peripheral tissues. This chain is Hemoglobin subunit alpha-A (HBAA), found in Struthio camelus (Common ostrich).